Reading from the N-terminus, the 416-residue chain is UDP-N-acetylglucosamine 1-carboxyvinyltransferase (416 aa).

A phosphoenolpyruvate-binding site is contributed by 22–23 (KN). Arg92 contributes to the UDP-N-acetyl-alpha-D-glucosamine binding site. Cys116 serves as the catalytic Proton donor. Cys116 carries the post-translational modification 2-(S-cysteinyl)pyruvic acid O-phosphothioketal. UDP-N-acetyl-alpha-D-glucosamine-binding positions include 121–125 (RPIDQ), Asp304, and Ile326.

Belongs to the EPSP synthase family. MurA subfamily.

Its subcellular location is the cytoplasm. The catalysed reaction is phosphoenolpyruvate + UDP-N-acetyl-alpha-D-glucosamine = UDP-N-acetyl-3-O-(1-carboxyvinyl)-alpha-D-glucosamine + phosphate. The protein operates within cell wall biogenesis; peptidoglycan biosynthesis. Functionally, cell wall formation. Adds enolpyruvyl to UDP-N-acetylglucosamine. In Desulfatibacillum aliphaticivorans, this protein is UDP-N-acetylglucosamine 1-carboxyvinyltransferase.